The chain runs to 116 residues: NADH-quinone oxidoreductase subunit A (116 aa).

3 helical membrane-spanning segments follow: residues Phe-3–Ile-23, Phe-61–Val-81, and Leu-85–Ala-105.

Belongs to the complex I subunit 3 family. As to quaternary structure, NDH-1 is composed of 14 different subunits. Subunits NuoA, H, J, K, L, M, N constitute the membrane sector of the complex.

Its subcellular location is the cell inner membrane. The catalysed reaction is a quinone + NADH + 5 H(+)(in) = a quinol + NAD(+) + 4 H(+)(out). In terms of biological role, NDH-1 shuttles electrons from NADH, via FMN and iron-sulfur (Fe-S) centers, to quinones in the respiratory chain. The immediate electron acceptor for the enzyme in this species is believed to be a menaquinone. Couples the redox reaction to proton translocation (for every two electrons transferred, four hydrogen ions are translocated across the cytoplasmic membrane), and thus conserves the redox energy in a proton gradient. The protein is NADH-quinone oxidoreductase subunit A of Phocaeicola vulgatus (strain ATCC 8482 / DSM 1447 / JCM 5826 / CCUG 4940 / NBRC 14291 / NCTC 11154) (Bacteroides vulgatus).